Consider the following 330-residue polypeptide: Protoheme IX farnesyltransferase (330 aa).

9 consecutive transmembrane segments (helical) span residues L30–A50, F58–V78, L106–L126, L127–L147, I155–G175, W182–L202, I228–M248, L249–V269, and A281–L301.

This sequence belongs to the UbiA prenyltransferase family. Protoheme IX farnesyltransferase subfamily.

It localises to the cell inner membrane. The enzyme catalyses heme b + (2E,6E)-farnesyl diphosphate + H2O = Fe(II)-heme o + diphosphate. The protein operates within porphyrin-containing compound metabolism; heme O biosynthesis; heme O from protoheme: step 1/1. Its function is as follows. Converts heme B (protoheme IX) to heme O by substitution of the vinyl group on carbon 2 of heme B porphyrin ring with a hydroxyethyl farnesyl side group. The chain is Protoheme IX farnesyltransferase from Synechococcus sp. (strain JA-2-3B'a(2-13)) (Cyanobacteria bacterium Yellowstone B-Prime).